The sequence spans 280 residues: L-aspartate dehydrogenase (280 aa).

NAD(+) is bound by residues alanine 134 and asparagine 202. Histidine 232 is a catalytic residue.

This sequence belongs to the L-aspartate dehydrogenase family.

It carries out the reaction L-aspartate + NADP(+) + H2O = oxaloacetate + NH4(+) + NADPH + H(+). It catalyses the reaction L-aspartate + NAD(+) + H2O = oxaloacetate + NH4(+) + NADH + H(+). It participates in cofactor biosynthesis; NAD(+) biosynthesis; iminoaspartate from L-aspartate (dehydrogenase route): step 1/1. In terms of biological role, specifically catalyzes the NAD or NADP-dependent dehydrogenation of L-aspartate to iminoaspartate. In Bradyrhizobium diazoefficiens (strain JCM 10833 / BCRC 13528 / IAM 13628 / NBRC 14792 / USDA 110), this protein is L-aspartate dehydrogenase.